A 39-amino-acid polypeptide reads, in one-letter code: Bacteriocin lactococcin-G subunit alpha (39 aa).

As to quaternary structure, bacteriocin activity requires interaction of alpha and beta peptides in a molar ratio of 7:1 or 8:1 respectively.

In terms of biological role, kills Lactococci. The sequence is that of Bacteriocin lactococcin-G subunit alpha from Lactococcus lactis subsp. lactis (Streptococcus lactis).